We begin with the raw amino-acid sequence, 95 residues long: PqqA binding protein (95 aa).

The protein belongs to the PqqD family. In terms of assembly, monomer. Interacts with PqqE.

The protein operates within cofactor biosynthesis; pyrroloquinoline quinone biosynthesis. In terms of biological role, functions as a PqqA binding protein and presents PqqA to PqqE, in the pyrroloquinoline quinone (PQQ) biosynthetic pathway. The chain is PqqA binding protein from Rahnella aquatilis.